Consider the following 154-residue polypeptide: Snaclec salmorin subunit A (154 aa).

Residues 1–23 (MGRFIFVSFGLLVVFLSLSGTGA) form the signal peptide. Intrachain disulfides connect Cys27–Cys38, Cys55–Cys152, and Cys127–Cys144. Residues 34–153 (NNGHCYQAFN…CGQRNPFVCE (120 aa)) enclose the C-type lectin domain. Ca(2+)-binding residues include Ser66, Glu68, and Glu72. Glu153 contributes to the Ca(2+) binding site.

Belongs to the snaclec family. In terms of assembly, heterodimer of subunits A and B; disulfide-linked. Expressed by the venom gland.

Its subcellular location is the secreted. In terms of biological role, inhibits thrombin-induced fibrinogen clotting and factor Xa-induced prothrombin activation. Binds to thrombin and prothrombin exosites. The chain is Snaclec salmorin subunit A from Gloydius brevicauda (Korean slamosa snake).